Here is a 123-residue protein sequence, read N- to C-terminus: Small ribosomal subunit protein uS12 (123 aa).

D89 carries the post-translational modification 3-methylthioaspartic acid.

Belongs to the universal ribosomal protein uS12 family. In terms of assembly, part of the 30S ribosomal subunit. Contacts proteins S8 and S17. May interact with IF1 in the 30S initiation complex.

In terms of biological role, with S4 and S5 plays an important role in translational accuracy. Functionally, interacts with and stabilizes bases of the 16S rRNA that are involved in tRNA selection in the A site and with the mRNA backbone. Located at the interface of the 30S and 50S subunits, it traverses the body of the 30S subunit contacting proteins on the other side and probably holding the rRNA structure together. The combined cluster of proteins S8, S12 and S17 appears to hold together the shoulder and platform of the 30S subunit. This Methylorubrum extorquens (strain PA1) (Methylobacterium extorquens) protein is Small ribosomal subunit protein uS12.